Consider the following 298-residue polypeptide: Protease HtpX homolog (298 aa).

2 consecutive transmembrane segments (helical) span residues 15–35 (LIMV…GYLF) and 39–59 (PWMG…IMWQ). His-143 serves as a coordination point for Zn(2+). Glu-144 is a catalytic residue. Zn(2+) is bound at residue His-147. Helical transmembrane passes span 153 to 173 (ILLS…SGMA) and 197 to 217 (MIFK…SASL). Glu-227 lines the Zn(2+) pocket.

This sequence belongs to the peptidase M48B family. Zn(2+) serves as cofactor.

Its subcellular location is the cell membrane. This is Protease HtpX homolog from Lactobacillus helveticus (strain DPC 4571).